The following is a 369-amino-acid chain: MKYKRIVFKVGTSSITHSDGSLSRGKIQTITRQLAALHHAGHELVLVSSGAVAAGFGALGFKKRPVKIADKQASAAVGQGLLMEEYTANLSSDGIVSAQILLSRADFADKRRYQNAGGALSVLLQRRAVPIINENDTVSVEELKIGDNDTLSAQVAAMIQADLLVLLTDIDGLYTGNPNSNPDAVRLDKIEHINHEIIEMAGGSGSANGTGGMLTKIKAATIATESGVPVYICSSLKPDALAEAADNQADGSFFVPRAKGLRTQKQWLAFYSESRGGVYVDEGAEHALSEQGKSLLMSGIAGIEGHFSRMDTVTVYSKATKQPLGKGRVLFGSAAAEDLLKLRKAKGVFIHRDDWISITPEIRLLLTEF.

K9 provides a ligand contact to ATP. Residues S49, D136, and N148 each contribute to the substrate site. Residues 168–169 (TD) and 210–216 (TGGMLTK) contribute to the ATP site. The PUA domain occupies 275–355 (RGGVYVDEGA…KGVFIHRDDW (81 aa)).

This sequence belongs to the glutamate 5-kinase family.

The protein resides in the cytoplasm. The catalysed reaction is L-glutamate + ATP = L-glutamyl 5-phosphate + ADP. It participates in amino-acid biosynthesis; L-proline biosynthesis; L-glutamate 5-semialdehyde from L-glutamate: step 1/2. Functionally, catalyzes the transfer of a phosphate group to glutamate to form L-glutamate 5-phosphate. This is Glutamate 5-kinase from Neisseria meningitidis serogroup A / serotype 4A (strain DSM 15465 / Z2491).